We begin with the raw amino-acid sequence, 205 residues long: Large ribosomal subunit protein uL4 (205 aa).

The segment at 43–78 (ARAGTKAQKTRSEVAGGGKKPWRQKGTGNARAGTIR) is disordered.

The protein belongs to the universal ribosomal protein uL4 family. As to quaternary structure, part of the 50S ribosomal subunit.

Its function is as follows. One of the primary rRNA binding proteins, this protein initially binds near the 5'-end of the 23S rRNA. It is important during the early stages of 50S assembly. It makes multiple contacts with different domains of the 23S rRNA in the assembled 50S subunit and ribosome. Forms part of the polypeptide exit tunnel. This chain is Large ribosomal subunit protein uL4, found in Halorhodospira halophila (strain DSM 244 / SL1) (Ectothiorhodospira halophila (strain DSM 244 / SL1)).